We begin with the raw amino-acid sequence, 219 residues long: Small ribosomal subunit protein uS3 (219 aa).

Positions 41–110 constitute a KH type-2 domain; sequence IRKIINTEYS…DVSINICEVK (70 aa).

It belongs to the universal ribosomal protein uS3 family. Part of the 30S ribosomal subunit. Forms a tight complex with proteins S10 and S14.

Binds the lower part of the 30S subunit head. Binds mRNA in the 70S ribosome, positioning it for translation. This Orientia tsutsugamushi (strain Ikeda) (Rickettsia tsutsugamushi) protein is Small ribosomal subunit protein uS3.